We begin with the raw amino-acid sequence, 86 residues long: Large ribosomal subunit protein bL31 (86 aa).

Residues 66–86 (GMGSADSATSQETKEAKESDK) form a disordered region. The segment covering 77-86 (ETKEAKESDK) has biased composition (basic and acidic residues).

This sequence belongs to the bacterial ribosomal protein bL31 family. Type A subfamily. Part of the 50S ribosomal subunit.

Functionally, binds the 23S rRNA. This chain is Large ribosomal subunit protein bL31, found in Prochlorococcus marinus (strain MIT 9515).